We begin with the raw amino-acid sequence, 513 residues long: Cyclin-dependent kinase C-2 (513 aa).

In terms of domain architecture, Protein kinase spans 26–325 (FEKLEQIGEG…AKDALDAEYF (300 aa)). Residues 32-40 (IGEGTYGQV) and lysine 55 each bind ATP. Tyrosine 37 bears the Phosphotyrosine mark. Residue aspartate 164 is the Proton acceptor of the active site. Threonine 198 is modified (phosphothreonine). Residues 337–513 (LPTYESSHEF…ARNQQYGWQP (177 aa)) are disordered. Over residues 395–404 (AGPNHPMNNN) the composition is skewed to low complexity. Residues 434–448 (SGNQTGGYNNQSRGG) show a composition bias toward polar residues. Composition is skewed to gly residues over residues 461–476 (APYG…GYGV) and 483–496 (QGGG…GSGR).

It belongs to the protein kinase superfamily. CMGC Ser/Thr protein kinase family. CDC2/CDKX subfamily. In terms of assembly, interacts with CYCT1-3. Highly expressed in flowers. Expressed in seedlings, roots, rosettes and stems.

It catalyses the reaction L-seryl-[protein] + ATP = O-phospho-L-seryl-[protein] + ADP + H(+). The catalysed reaction is L-threonyl-[protein] + ATP = O-phospho-L-threonyl-[protein] + ADP + H(+). The enzyme catalyses [DNA-directed RNA polymerase] + ATP = phospho-[DNA-directed RNA polymerase] + ADP + H(+). The protein is Cyclin-dependent kinase C-2 (CDKC-2) of Arabidopsis thaliana (Mouse-ear cress).